A 302-amino-acid polypeptide reads, in one-letter code: tRNA dimethylallyltransferase (302 aa).

9 to 16 is a binding site for ATP; it reads GPTGSGKT. 11–16 contributes to the substrate binding site; sequence TGSGKT.

This sequence belongs to the IPP transferase family. Monomer. It depends on Mg(2+) as a cofactor.

It catalyses the reaction adenosine(37) in tRNA + dimethylallyl diphosphate = N(6)-dimethylallyladenosine(37) in tRNA + diphosphate. Its function is as follows. Catalyzes the transfer of a dimethylallyl group onto the adenine at position 37 in tRNAs that read codons beginning with uridine, leading to the formation of N6-(dimethylallyl)adenosine (i(6)A). This is tRNA dimethylallyltransferase from Thermus thermophilus (strain ATCC BAA-163 / DSM 7039 / HB27).